Reading from the N-terminus, the 161-residue chain is tRNA-acetylating toxin 1 (161 aa).

Positions 92, 94, 99, 100, 102, 104, 105, 132, and 135 each coordinate acetyl-CoA. Tyrosine 140 is a catalytic residue. Histidine 142 contacts acetyl-CoA.

The protein belongs to the acetyltransferase family. GNAT subfamily. In terms of assembly, homodimer (in absence of antitoxin). Forms a complex with cognate antitoxin TacA1. Forms a 4:2 antitoxin:toxin complex with cognate antitoxin TacA1.

The catalysed reaction is glycyl-tRNA(Gly) + acetyl-CoA = N-acetylglycyl-tRNA(Gly) + CoA + H(+). Functionally, toxic component of a type II toxin-antitoxin (TA) system. Acetylates tRNA and inhibits translation, does not acetylate uncharged tRNA. Upon expression in situ acetylates only Gly-tRNA(Gly). In vitro acetylates mainly Gly and Ile/Leu. Upon induction of the toxin gene in lag phase in rich medium (but not mid-exponential phase) the lag phase is extended by several hours, locking bacteria in a non-growth state. Neutralized only by cognate antitoxin TacA1 (A8), but not by TacA2 or TacA3. Its toxic effect is neutralized by expression of peptidyl-tRNA hydrolase (pth) in lag phase. NAD-dependent protein deacylase (cobB) also play a role in detoxifying TacT targets. Expression increases persister cell formation, which is also abolished by either cognate antitoxin or Pth expression. Plays a role in persister cell formation. Its function is as follows. The TacA1-TacT1 complex binds (and probably represses) its own promoter DNA but not that of tacA3-tacT3, it does not repress the tacA3-tacT3 promoter. The sequence is that of tRNA-acetylating toxin 1 from Salmonella typhimurium (strain 14028s / SGSC 2262).